The following is a 243-amino-acid chain: MLARSLLPALALLLAATAGGDACADRGHPSAERSTPETERRRMVEEQLAARGIRDRRVLEAMGKVPRERFVPEQWRSLAYLDEPLPIGRGQTISQPYVVAFMAQALALRGGERVLEVGSGSGYAAAVLAHLAGAVYGIELEPELHARSVETLAELGYGNVHLRRGDGFLGWPERAPFRAIVVSCAMEEIPAPLWEQLVQGGRIVYPKGPEGEVQLLVVVTKTARGPREEHLAPVRFVPMRRGG.

The disordered stretch occupies residues 21 to 42 (DACADRGHPSAERSTPETERRR). Over residues 23 to 42 (CADRGHPSAERSTPETERRR) the composition is skewed to basic and acidic residues. The active site involves Ser94.

It belongs to the methyltransferase superfamily. L-isoaspartyl/D-aspartyl protein methyltransferase family.

Its subcellular location is the cytoplasm. It catalyses the reaction [protein]-L-isoaspartate + S-adenosyl-L-methionine = [protein]-L-isoaspartate alpha-methyl ester + S-adenosyl-L-homocysteine. Catalyzes the methyl esterification of L-isoaspartyl residues in peptides and proteins that result from spontaneous decomposition of normal L-aspartyl and L-asparaginyl residues. It plays a role in the repair and/or degradation of damaged proteins. In Anaeromyxobacter sp. (strain Fw109-5), this protein is Protein-L-isoaspartate O-methyltransferase 2.